The following is a 175-amino-acid chain: Peptide methionine sulfoxide reductase MsrA (175 aa).

C10 is a catalytic residue.

Belongs to the MsrA Met sulfoxide reductase family.

It catalyses the reaction L-methionyl-[protein] + [thioredoxin]-disulfide + H2O = L-methionyl-(S)-S-oxide-[protein] + [thioredoxin]-dithiol. The enzyme catalyses [thioredoxin]-disulfide + L-methionine + H2O = L-methionine (S)-S-oxide + [thioredoxin]-dithiol. Functionally, has an important function as a repair enzyme for proteins that have been inactivated by oxidation. Catalyzes the reversible oxidation-reduction of methionine sulfoxide in proteins to methionine. This chain is Peptide methionine sulfoxide reductase MsrA, found in Psychrobacter sp. (strain PRwf-1).